A 526-amino-acid polypeptide reads, in one-letter code: Glutamyl-tRNA(Gln) amidotransferase subunit A, mitochondrial (526 aa).

The active-site Charge relay system is lysine 76. A disordered region spans residues 147 to 166; the sequence is QYREKRKQNSHSENEDSNWL. The active-site Charge relay system is serine 171. Serine 195 functions as the Acyl-ester intermediate in the catalytic mechanism.

It belongs to the amidase family. GatA subfamily. Subunit of the heterotrimeric GatCAB amidotransferase (AdT) complex, composed of A (QRSL1), B (GATB) and C (GATC) subunits.

The protein localises to the mitochondrion. The catalysed reaction is L-glutamyl-tRNA(Gln) + L-glutamine + ATP + H2O = L-glutaminyl-tRNA(Gln) + L-glutamate + ADP + phosphate + H(+). In terms of biological role, allows the formation of correctly charged Gln-tRNA(Gln) through the transamidation of misacylated Glu-tRNA(Gln) in the mitochondria. The reaction takes place in the presence of glutamine and ATP through an activated gamma-phospho-Glu-tRNA(Gln). This is Glutamyl-tRNA(Gln) amidotransferase subunit A, mitochondrial from Bos taurus (Bovine).